A 511-amino-acid polypeptide reads, in one-letter code: MSHFELQPGQLQLSELRDWFYQHQTLKLSDEAKDNIATSAKTVADVLEQGRVVYGINTGFGLLANTRIPPERLTDLQRRIVLSHAAGTGDLMEDSVVRLMLLLKINSLSRGFSGVRQVLVDALIKLLNAEVYPCIPEKGSVGASGDLAPLAHMVLPLVGEGTVRHNGKVLNAEEGLKIAGIEPFELAPKEGLALLNGTQASTALALAGLFRIERNFHAAIVVGATSVEAAMGSRAPFDERVHAVRGQPGQIKAAEMLRHVLTDSSEIAKDHENCEKVQDPYSLRCQPQVMGAVLDQIEHASGILVREANGVTDNPLVFSEEQDIISGGNFHAEPVAMAADILAIAASEIGALSERRSALLIDSHLSKLPAFLVNDGGVNSGFMLAQVTAAALASENKTLAHPASVDSLPTSANQEDHVSMATFAARRLTDIAKNVSDIIAIEWLEAAQGLDFRRPLKGAAAVETAFNCLREQVAYYAEDRFFAPDIKAASDLIQNGELAAVVKLPHILSEV.

The segment at residues 143–145 (ASG) is a cross-link (5-imidazolinone (Ala-Gly)). Ser144 carries the 2,3-didehydroalanine (Ser) modification.

The protein belongs to the PAL/histidase family. In terms of processing, contains an active site 4-methylidene-imidazol-5-one (MIO), which is formed autocatalytically by cyclization and dehydration of residues Ala-Ser-Gly.

It is found in the cytoplasm. It carries out the reaction L-histidine = trans-urocanate + NH4(+). It participates in amino-acid degradation; L-histidine degradation into L-glutamate; N-formimidoyl-L-glutamate from L-histidine: step 1/3. The protein is Histidine ammonia-lyase of Idiomarina loihiensis (strain ATCC BAA-735 / DSM 15497 / L2-TR).